Consider the following 424-residue polypeptide: UDP-N-acetylglucosamine 1-carboxyvinyltransferase (424 aa).

Residue Lys-22–Asn-23 participates in phosphoenolpyruvate binding. Arg-98 contacts UDP-N-acetyl-alpha-D-glucosamine. The Proton donor role is filled by Cys-122. Cys-122 carries the post-translational modification 2-(S-cysteinyl)pyruvic acid O-phosphothioketal. UDP-N-acetyl-alpha-D-glucosamine is bound by residues Arg-127 to Gln-131, Asp-312, and Ile-334.

Belongs to the EPSP synthase family. MurA subfamily.

Its subcellular location is the cytoplasm. It catalyses the reaction phosphoenolpyruvate + UDP-N-acetyl-alpha-D-glucosamine = UDP-N-acetyl-3-O-(1-carboxyvinyl)-alpha-D-glucosamine + phosphate. It participates in cell wall biogenesis; peptidoglycan biosynthesis. Cell wall formation. Adds enolpyruvyl to UDP-N-acetylglucosamine. The sequence is that of UDP-N-acetylglucosamine 1-carboxyvinyltransferase from Xanthomonas campestris pv. campestris (strain 8004).